The chain runs to 92 residues: Small ribosomal subunit protein uS19 (92 aa).

This sequence belongs to the universal ribosomal protein uS19 family.

Its function is as follows. Protein S19 forms a complex with S13 that binds strongly to the 16S ribosomal RNA. This is Small ribosomal subunit protein uS19 from Borreliella afzelii (strain PKo) (Borrelia afzelii).